The primary structure comprises 264 residues: uncharacterized protein (264 aa).

Helical transmembrane passes span 1–21 (MLLGLGIVVLIYSLIALSVSL), 43–63 (FFGVLNLLIALGVAGIINGFV), 95–115 (VVGLIHAGILMVLTTVALSSL), 146–166 (IATWTSVGIFWFLGLVLLGGL), 181–201 (GWLAVVVIGLTTLVVMVQPFV), and 215–235 (IVANTILIAILVIIVLVMFFP).

It to M.pneumoniae MPN_308 C-terminal region.

The protein resides in the cell membrane. This is an uncharacterized protein from Mycoplasma pneumoniae (strain ATCC 29342 / M129 / Subtype 1) (Mycoplasmoides pneumoniae).